We begin with the raw amino-acid sequence, 115 residues long: NADH-ubiquinone oxidoreductase chain 3 (115 aa).

Met1 bears the N-formylmethionine mark. A run of 3 helical transmembrane segments spans residues 3-23 (LMLA…IAFW), 55-75 (FFLV…LLPL), and 84-104 (LNTM…SLAY).

As to quaternary structure, core subunit of respiratory chain NADH dehydrogenase (Complex I) which is composed of 45 different subunits. Interacts with TMEM186. Interacts with TMEM242.

The protein resides in the mitochondrion inner membrane. The catalysed reaction is a ubiquinone + NADH + 5 H(+)(in) = a ubiquinol + NAD(+) + 4 H(+)(out). Core subunit of the mitochondrial membrane respiratory chain NADH dehydrogenase (Complex I) which catalyzes electron transfer from NADH through the respiratory chain, using ubiquinone as an electron acceptor. Essential for the catalytic activity of complex I. In Bos taurus (Bovine), this protein is NADH-ubiquinone oxidoreductase chain 3.